Here is a 437-residue protein sequence, read N- to C-terminus: mRNA cleavage and polyadenylation factor CLP1 (437 aa).

ATP is bound by residues Glu23 and 122-127 (STGKSS).

This sequence belongs to the Clp1 family. Clp1 subfamily. As to quaternary structure, component of a pre-mRNA cleavage factor complex. Interacts directly with PCF11.

Its subcellular location is the nucleus. Required for endonucleolytic cleavage during polyadenylation-dependent pre-mRNA 3'-end formation. The chain is mRNA cleavage and polyadenylation factor CLP1 from Kluyveromyces lactis (strain ATCC 8585 / CBS 2359 / DSM 70799 / NBRC 1267 / NRRL Y-1140 / WM37) (Yeast).